A 187-amino-acid chain; its full sequence is Large ribosomal subunit protein uL22 (187 aa).

The disordered stretch occupies residues 161 to 187 (APTDDAPAKKKLSKKKLARQKEKMMRE). The segment covering 169–178 (KKKLSKKKLA) has biased composition (basic residues).

It belongs to the universal ribosomal protein uL22 family.

In Bombyx mori (Silk moth), this protein is Large ribosomal subunit protein uL22 (RpL17).